The following is a 600-amino-acid chain: NADH-quinone oxidoreductase subunit C/D (600 aa).

An NADH dehydrogenase I subunit C region spans residues 1-190 (MIDLMPKKNT…EPFFLNEQKE (190 aa)). The segment at 214-600 (EFMFLNLGPN…IDFVMSDVDR (387 aa)) is NADH dehydrogenase I subunit D.

In the N-terminal section; belongs to the complex I 30 kDa subunit family. The protein in the C-terminal section; belongs to the complex I 49 kDa subunit family. As to quaternary structure, NDH-1 is composed of 13 different subunits. Subunits NuoB, CD, E, F, and G constitute the peripheral sector of the complex.

The protein localises to the cell inner membrane. The enzyme catalyses a quinone + NADH + 5 H(+)(in) = a quinol + NAD(+) + 4 H(+)(out). Functionally, NDH-1 shuttles electrons from NADH, via FMN and iron-sulfur (Fe-S) centers, to quinones in the respiratory chain. The immediate electron acceptor for the enzyme in this species is believed to be ubiquinone. Couples the redox reaction to proton translocation (for every two electrons transferred, four hydrogen ions are translocated across the cytoplasmic membrane), and thus conserves the redox energy in a proton gradient. The chain is NADH-quinone oxidoreductase subunit C/D from Buchnera aphidicola subsp. Acyrthosiphon pisum (strain APS) (Acyrthosiphon pisum symbiotic bacterium).